The primary structure comprises 358 residues: Probable ABC transporter periplasmic-binding protein y4fP (358 aa).

Positions 1–46 are cleaved as a signal peptide; it reads MRNVIKLTWSRRKRSASLDKGENIMKLAFAFATAAIVVAAAFPALA.

It belongs to the bacterial solute-binding protein 1 family.

It localises to the periplasm. In terms of biological role, probably part of the binding-protein-dependent transport system y4fNOP. This chain is Probable ABC transporter periplasmic-binding protein y4fP, found in Sinorhizobium fredii (strain NBRC 101917 / NGR234).